The chain runs to 251 residues: PF03932 family protein CutC (251 aa).

Belongs to the CutC family.

It localises to the cytoplasm. The polypeptide is PF03932 family protein CutC (Erwinia tasmaniensis (strain DSM 17950 / CFBP 7177 / CIP 109463 / NCPPB 4357 / Et1/99)).